A 1451-amino-acid polypeptide reads, in one-letter code: Copper-transporting ATPase 2 (1451 aa).

Topologically, residues 1–646 are cytoplasmic; the sequence is MPEQERKVTA…KTEIKQWKKS (646 aa). 3 consecutive HMA domains span residues 57 to 123, 142 to 208, and 256 to 322; these read TTGV…FEAS, AVVK…FEAA, and ATLP…PGYF. Residues Cys-68, Cys-71, Cys-153, Cys-156, Cys-267, and Cys-270 each coordinate Cu(+). The tract at residues 328–353 is disordered; that stretch reads DGLEKESGSSSVPSLGSSQRQQEPGP. A compositionally biased stretch (low complexity) spans 335–345; it reads GSSSVPSLGSS. The region spanning 355–421 is the HMA 4 domain; that stretch reads RTAVLTITGI…AVEDMGFEVS (67 aa). Residues Ser-469, Ser-471, and Ser-474 each carry the phosphoserine modification. HMA domains are found at residues 481-547 and 557-623; these read QKCF…FEAA and GDIE…FHAS. Residues Cys-492, Cys-495, Cys-568, and Cys-571 each contribute to the Cu(+) site. The helical transmembrane segment at 647 to 668 threads the bilayer; the sequence is FLCSLVFGIPVMGLMIYMLIPS. At 669-690 the chain is on the extracellular side; the sequence is SKPHETMVLDHNIIPGLSVLNL. The chain crosses the membrane as a helical span at residues 691–710; the sequence is IFFILCTFVQFLGGWYFYVQ. The Cytoplasmic portion of the chain corresponds to 711–717; it reads AYKSLRH. A helical transmembrane segment spans residues 718 to 738; sequence KSANMDVLIVLATTIAYAYSL. Residues 739–757 lie on the Extracellular side of the membrane; sequence VILVVAIAEKAEKSPVTFF. Residues 758–778 traverse the membrane as a helical segment; the sequence is DTPPMLFVFIALGRWLEHVAK. Residues 779–912 lie on the Cytoplasmic side of the membrane; it reads SKTSEALAKL…KAPIQQLADR (134 aa). The helical transmembrane segment at 913 to 935 threads the bilayer; sequence FSGYFVPFIIIISTLTLVVWIII. Residues 936–965 are Extracellular-facing; it reads GFVDFGIVQKYFPSPSKHISQTEVIIRFAF. A helical transmembrane segment spans residues 966-987; the sequence is QTSITVLCIACPCSLGLATPTA. Over 988-1310 the chain is Cytoplasmic; that stretch reads VMVGTGVAAQ…LSKRTVRRIR (323 aa). The active-site 4-aspartylphosphate intermediate is the Asp-1020. 2 residues coordinate Mg(2+): Asp-1255 and Asp-1259. Residues 1311 to 1328 traverse the membrane as a helical segment; the sequence is VNLVLALIYNMVGIPIAA. Over 1329-1339 the chain is Extracellular; the sequence is GVFMPIGIVLQ. The helical transmembrane segment at 1340-1357 threads the bilayer; the sequence is PWMGSAAASSVSVVLSSL. Topologically, residues 1358-1451 are cytoplasmic; sequence QLKCYRKPDL…LSDRDEEQCI (94 aa). Residues Ser-1384 and Ser-1443 each carry the phosphoserine modification.

It belongs to the cation transport ATPase (P-type) (TC 3.A.3) family. Type IB subfamily. Monomer. Interacts with COMMD1/MURR1. Interacts with DCTN4, in a copper-dependent manner. Interacts with ATOX1. Interacts (via C-terminus) with ZBTB16/PLZF. As to expression, expressed in brain, liver, kidney, spleen and stomach. In brain, detected in neuronal cells of the hippocampal formation, olfactory bulbs, cerebellum, cerebral cortex and nuclei in the brainstem. Isoform PINA is expressed during night in adult pineal gland (pinealocytes) and retina. Isoform PINA is not detected in other tissue.

Its subcellular location is the golgi apparatus. It is found in the trans-Golgi network membrane. The protein resides in the late endosome. The enzyme catalyses Cu(+)(in) + ATP + H2O = Cu(+)(out) + ADP + phosphate + H(+). In terms of biological role, copper ion transmembrane transporter involved in the export of copper out of the cells, such as the efflux of hepatic copper into the bile. The protein is Copper-transporting ATPase 2 (Atp7b) of Rattus norvegicus (Rat).